Reading from the N-terminus, the 156-residue chain is MKIQLIAVGTKMPDWVTTGFNEYQRRFPKDMPLELLEIPAGKRGKNADIARILEKEGEQALAAVGKSSRIVTLDLPGKNWTTPQLAQQLESWKQDGRDVALLIGGPEGLSPACKAAAEQSWCLSALTMPHPLVRIVVAESLYRAWSLTTNHPYHRE.

Residues Leu-73, Gly-104, and 123 to 128 (LSALTM) each bind S-adenosyl-L-methionine.

It belongs to the RNA methyltransferase RlmH family. In terms of assembly, homodimer.

Its subcellular location is the cytoplasm. It catalyses the reaction pseudouridine(1915) in 23S rRNA + S-adenosyl-L-methionine = N(3)-methylpseudouridine(1915) in 23S rRNA + S-adenosyl-L-homocysteine + H(+). Its function is as follows. Specifically methylates the pseudouridine at position 1915 (m3Psi1915) in 23S rRNA. The sequence is that of Ribosomal RNA large subunit methyltransferase H from Tolumonas auensis (strain DSM 9187 / NBRC 110442 / TA 4).